The sequence spans 152 residues: Deoxyuridine 5'-triphosphate nucleotidohydrolase (152 aa).

Residues 63–65 (RSG), asparagine 76, and 80–82 (TID) each bind substrate. The interval 129–152 (LDDTERGQGGYGSTGVSAMPPVDG) is disordered.

The protein belongs to the dUTPase family. Mg(2+) is required as a cofactor.

It carries out the reaction dUTP + H2O = dUMP + diphosphate + H(+). It participates in pyrimidine metabolism; dUMP biosynthesis; dUMP from dCTP (dUTP route): step 2/2. Functionally, this enzyme is involved in nucleotide metabolism: it produces dUMP, the immediate precursor of thymidine nucleotides and it decreases the intracellular concentration of dUTP so that uracil cannot be incorporated into DNA. This chain is Deoxyuridine 5'-triphosphate nucleotidohydrolase, found in Cutibacterium acnes (strain DSM 16379 / KPA171202) (Propionibacterium acnes).